The sequence spans 522 residues: MSLRVHTLPTLLGAVVRPGCRELLCLLMITVAVGPGASGVCPTACICATDIVSCTNKHLSKVPGNLFRLMKRLDLSYNRIGLLDSEWIPVSFAKLNTLILRHNNITSISTGSFSTTPNLKCLDLSSNKLKTVKNAVFQELKVLEVLLLYNNHISYLDPSAFGGLSQLQKLYLSGNFLTQFPMDLYVGRFKLAELMFLDVSYNRIPSMPMHHINLVPGKQLRGIYLHGNPFVCDCSLYSLLVFWYRRHFSSVMDFKNDYTCRLWSDSRHSRQVLLLQDSFMNCSDSIINGSFRALGFIHEAQVGERLMVHCDSKTGNANTDFIWVGPDNRLLEPDKEMENFYVFHNGSLVIESPRFEDAGVYSCIAMNKQRLLNETVDVTINVSNVTVSRSHAHEAFNTAFTTLAACVASIVLVLLYLYLTPCPCKCKTKRQKNMLHQSNAHSSILSPGPASDASADERKAGAGKRVVFLEPLKDTAAGQNGKVRLFPSEAVIAEGILKSTRGKSDSDSVNSVFSDTPFVAST.

Residues M1 to G39 form the signal peptide. The 29-residue stretch at V40–R68 folds into the LRRNT domain. Over V40 to T398 the chain is Extracellular. Disulfide bonds link C41-C47 and C45-C54. LRR repeat units follow at residues L69–V90, K94–T115, N118–E139, V142–G163, Q166–G187, and E193–L214. N-linked (GlcNAc...) asparagine glycosylation is present at N104. The region spanning N228–D284 is the LRRCT domain. 2 disulfide bridges follow: C232/C260 and C234/C282. Residues N281, N288, N345, N373, N381, and N384 are each glycosylated (N-linked (GlcNAc...) asparagine). In terms of domain architecture, Ig-like C2-type spans G289 to T379. C310 and C363 form a disulfide bridge. A helical membrane pass occupies residues A399–L419. At T420–T522 the chain is on the cytoplasmic side. Positions R501–T522 are disordered.

This sequence belongs to the immunoglobulin superfamily. AMIGO family. Binds itself as well as AMIGO1 and AMIGO3.

It localises to the cell membrane. It is found in the nucleus. Functionally, required for depolarization-dependent survival of cultured cerebellar granule neurons. May mediate homophilic as well as heterophilic cell-cell interaction with AMIGO1 or AMIGO3. May contribute to signal transduction through its intracellular domain. The sequence is that of Amphoterin-induced protein 2 from Pongo abelii (Sumatran orangutan).